A 445-amino-acid chain; its full sequence is tRNA-2-methylthio-N(6)-dimethylallyladenosine synthase (445 aa).

One can recognise an MTTase N-terminal domain in the interval K3–R124. Positions 12, 48, 87, 162, 166, and 169 each coordinate [4Fe-4S] cluster. A Radical SAM core domain is found at Y148–A380. Residues E383–L445 enclose the TRAM domain.

The protein belongs to the methylthiotransferase family. MiaB subfamily. Monomer. Requires [4Fe-4S] cluster as cofactor.

Its subcellular location is the cytoplasm. It carries out the reaction N(6)-dimethylallyladenosine(37) in tRNA + (sulfur carrier)-SH + AH2 + 2 S-adenosyl-L-methionine = 2-methylsulfanyl-N(6)-dimethylallyladenosine(37) in tRNA + (sulfur carrier)-H + 5'-deoxyadenosine + L-methionine + A + S-adenosyl-L-homocysteine + 2 H(+). In terms of biological role, catalyzes the methylthiolation of N6-(dimethylallyl)adenosine (i(6)A), leading to the formation of 2-methylthio-N6-(dimethylallyl)adenosine (ms(2)i(6)A) at position 37 in tRNAs that read codons beginning with uridine. The protein is tRNA-2-methylthio-N(6)-dimethylallyladenosine synthase of Rickettsia akari (strain Hartford).